Consider the following 186-residue polypeptide: MTLLVGLGNPTLRYAHTRHNAGFDILDSLISELDLSFTFSSKHNACLCVYKDFILLKPQTYMNLSGESVLSAKNFYKTEELLIVHDDLDLDLGVVRFKNGGGNGGHNGLKSIDLLCSNSYYRLRVGISKGMGVIEHVLSKFHKNEEPLKNAAFEHAKNALKFFIESHDFNAMQNRFTLKKPLKIES.

Tyr-14 contributes to the tRNA binding site. His-19 serves as the catalytic Proton acceptor. The tRNA site is built by Tyr-61, Asn-63, and Asn-107.

The protein belongs to the PTH family. As to quaternary structure, monomer.

The protein resides in the cytoplasm. It carries out the reaction an N-acyl-L-alpha-aminoacyl-tRNA + H2O = an N-acyl-L-amino acid + a tRNA + H(+). In terms of biological role, hydrolyzes ribosome-free peptidyl-tRNAs (with 1 or more amino acids incorporated), which drop off the ribosome during protein synthesis, or as a result of ribosome stalling. Its function is as follows. Catalyzes the release of premature peptidyl moieties from peptidyl-tRNA molecules trapped in stalled 50S ribosomal subunits, and thus maintains levels of free tRNAs and 50S ribosomes. This Helicobacter pylori (strain Shi470) protein is Peptidyl-tRNA hydrolase.